The chain runs to 308 residues: S-crystallin SL18 (308 aa).

One can recognise a GST N-terminal domain in the interval 2 to 80 (PKYTLYYFNS…YLARQFGFYG (79 aa)). Residues 165 to 205 (EMRSQDSMVEPPSQKLSPELESQSSLCSERPQCGPPDPMMG) are disordered. Polar residues predominate over residues 178–191 (QKLSPELESQSSLC). The GST C-terminal domain maps to 185–308 (ESQSSLCSER…YFTLRNYTDF (124 aa)).

The protein belongs to the GST superfamily. Lens.

Functionally, S-crystallins are structural components of squids and octopi eye lens. Contains relatively little if any GST activity. In Nototodarus sloanii (Wellington flying squid), this protein is S-crystallin SL18.